A 162-amino-acid chain; its full sequence is uncharacterized protein (162 aa).

An N-terminal signal peptide occupies residues 1–18 (MRKTFLTLLCVSSAIAHA).

This sequence belongs to the fimbrial protein family.

Functionally, part of the yfcOPQRSUV fimbrial operon. Could contribute to adhesion to various surfaces in specific environmental niches. Increases adhesion to eukaryotic T24 bladder epithelial cells in the absence of fim genes. This is an uncharacterized protein from Escherichia coli (strain K12).